We begin with the raw amino-acid sequence, 229 residues long: Large ribosomal subunit protein uL1 (229 aa).

Belongs to the universal ribosomal protein uL1 family. Part of the 50S ribosomal subunit.

Its function is as follows. Binds directly to 23S rRNA. The L1 stalk is quite mobile in the ribosome, and is involved in E site tRNA release. Functionally, protein L1 is also a translational repressor protein, it controls the translation of the L11 operon by binding to its mRNA. The chain is Large ribosomal subunit protein uL1 from Clostridium botulinum (strain Alaska E43 / Type E3).